We begin with the raw amino-acid sequence, 285 residues long: Ribose-phosphate pyrophosphokinase (285 aa).

ATP-binding positions include 34–36 and 91–92; these read DGE and RQ. The Mg(2+) site is built by His-124 and Asp-162. The active site involves Lys-185. D-ribose 5-phosphate contacts are provided by residues Arg-187, Asp-211, and 215 to 219; that span reads STGGT.

The protein belongs to the ribose-phosphate pyrophosphokinase family. Class III (archaeal) subfamily. Mg(2+) is required as a cofactor.

Its subcellular location is the cytoplasm. The enzyme catalyses D-ribose 5-phosphate + ATP = 5-phospho-alpha-D-ribose 1-diphosphate + AMP + H(+). The protein operates within metabolic intermediate biosynthesis; 5-phospho-alpha-D-ribose 1-diphosphate biosynthesis; 5-phospho-alpha-D-ribose 1-diphosphate from D-ribose 5-phosphate (route I): step 1/1. In terms of biological role, involved in the biosynthesis of the central metabolite phospho-alpha-D-ribosyl-1-pyrophosphate (PRPP) via the transfer of pyrophosphoryl group from ATP to 1-hydroxyl of ribose-5-phosphate (Rib-5-P). In Pyrococcus abyssi (strain GE5 / Orsay), this protein is Ribose-phosphate pyrophosphokinase.